A 232-amino-acid polypeptide reads, in one-letter code: Clarin-1 (232 aa).

A helical transmembrane segment spans residues 8–28; sequence IIFCMAGVLSFLCALGVVTAV. Asn-48 carries N-linked (GlcNAc...) asparagine glycosylation. 2 consecutive transmembrane segments (helical) span residues 101–121 and 135–155; these read IILF…FFMY and LGLY…MILF. N-linked (GlcNAc...) asparagine glycosylation occurs at Asn-184. Residues 186 to 206 traverse the membrane as a helical segment; the sequence is TTSFWVVFICFFVHFLNGLLI.

This sequence belongs to the clarin family.

The protein localises to the cell membrane. Its function is as follows. May have a role in the excitatory ribbon synapse junctions between hair cells and cochlear ganglion cells and presumably also in analogous synapses within the retina. This is Clarin-1 (Clrn1) from Mus musculus (Mouse).